A 686-amino-acid polypeptide reads, in one-letter code: Methionine--tRNA ligase (686 aa).

The 'HIGH' region signature appears at 15–25 (PYANGSIHLGH). Zn(2+) is bound by residues Cys146, Cys149, Cys159, and Cys162. Residues 332 to 336 (KMSKS) carry the 'KMSKS' region motif. Lys335 provides a ligand contact to ATP. The 102-residue stretch at 585–686 (AFEAVDMRIA…EGAQPGMRVM (102 aa)) folds into the tRNA-binding domain.

Belongs to the class-I aminoacyl-tRNA synthetase family. MetG type 1 subfamily. Homodimer. Requires Zn(2+) as cofactor.

It is found in the cytoplasm. It catalyses the reaction tRNA(Met) + L-methionine + ATP = L-methionyl-tRNA(Met) + AMP + diphosphate. Is required not only for elongation of protein synthesis but also for the initiation of all mRNA translation through initiator tRNA(fMet) aminoacylation. The polypeptide is Methionine--tRNA ligase (Aliivibrio salmonicida (strain LFI1238) (Vibrio salmonicida (strain LFI1238))).